We begin with the raw amino-acid sequence, 211 residues long: LexA repressor (211 aa).

A DNA-binding region (H-T-H motif) is located at residues 29 to 49; that stretch reads VREICTAVGLRSTSTVHSHLN. Catalysis depends on for autocatalytic cleavage activity residues Ser131 and Lys169.

The protein belongs to the peptidase S24 family. In terms of assembly, homodimer.

The enzyme catalyses Hydrolysis of Ala-|-Gly bond in repressor LexA.. Functionally, represses a number of genes involved in the response to DNA damage (SOS response), including recA and lexA. In the presence of single-stranded DNA, RecA interacts with LexA causing an autocatalytic cleavage which disrupts the DNA-binding part of LexA, leading to derepression of the SOS regulon and eventually DNA repair. This Clostridioides difficile (strain 630) (Peptoclostridium difficile) protein is LexA repressor.